Consider the following 919-residue polypeptide: SFIKHSLSYDMPSEISYLVNTIIESTKELIKTINDFDIDTYINDLIISEYNKQKSQLILEEFKHEMINNFLPHMNDTPNQLKGFYIMSLLRKFIYCIYYTSRYPDRDSMVCHRVLTYGKYFEILAHDELENYIGNIRTDIINNHKNRGTYSVNIHVLTTPGFNHAFSGLLSGKFKKTDGSYRTHSHYSWMQNISIPRSVGYYPDQVKISKMFSVRKYHPSQYAYFCPSDVPERGPQVGLVSQLSVLTSITNICTNEYLELEKKICNYIRSYNHNDISYFETGYYITLENSLIACLNPNLVDDFVIDFRRKKRMNYFGNLEIGITLVNDHMNEIRINIGGGRLIRPFLVIDNGNLIMDEIFSELEFKIDDMTFSDIQKEFPHVIEIVDIEQFTFSNVCESVQKFRALPKSEKCKYHLCDFPAEFKDGYVASSLVGINHNSGPRAILGCAQRKQAISCLSSDIRNKIDNGIHLIYPERPIVISKALETSKIAVNCFGQHVTIALMSYKGINQEDGIIIKKQFVERGGLDIITAKKHQVEIPLENFNNKERVKSTAYSKLESNGLVRLNAFLESGDAIARNISSRTLEDDFVQDNQISFDISDRYTDMYQSRVERVQVDLTDKVKVRVLTMKERRPVLGDKFTSRTSQKGTVAYIADETELPYDENGIKPDVIINSTSIFSRKTVSMLIEVILTSAYEVSPYNNDGQNRPICFPSSNETSIDTYLDFAKRCHRDRYPSLSDDDINDKMFCDTILYDPETDKPYSSKIFMGPIYYLRLRHLTQDKATVRCRGKKTKLIRQANEGRRRGGGIKFGEMERDCLIAHGAANTITEVLKDSEEDYQDVYVCENCGDITAQIQGNKVCIRCSKQNLSTILTKVDTTHVAKVFITQMNARGVKVKLEFEKRNPLFYKPLDVVDLSPNFL.

This sequence belongs to the RNA polymerase beta chain family. The DNA-dependent RNA polymerase used for intermediate and late genes expression consists of eight subunits (147) kDa, (133) kDa, (35) kDa, (30) kDa, (22) kDa, (19) kDa, (18) kDa and (7) kDa totalling more than 500 kDa in mass. The same holoenzyme, with the addition of the transcription-specificity factor RAP94, is used for early gene expression.

It localises to the virion. The catalysed reaction is RNA(n) + a ribonucleoside 5'-triphosphate = RNA(n+1) + diphosphate. In terms of biological role, part of the DNA-dependent RNA polymerase which catalyzes the transcription of viral DNA into RNA using the four ribonucleoside triphosphates as substrates. Responsible for the transcription of early, intermediate and late genes. DNA-dependent RNA polymerase associates with the early transcription factor (ETF), itself composed of D6 and A7, thereby allowing the early genes transcription. Late transcription, and probably also intermediate transcription, require newly synthesized RNA polymerase. In Sheeppox virus (strain KS-1) (SPPV), this protein is DNA-directed RNA polymerase 132 kDa polypeptide (RPO132).